A 105-amino-acid polypeptide reads, in one-letter code: ATPase inhibitor A, mitochondrial (105 aa).

The segment at 17–52 (MSSDQLGELGTGAGKGGGGGGSVRAAGGSFGRREAA) is disordered. The N-terminal inhibitory region stretch occupies residues 22–51 (LGELGTGAGKGGGGGGSVRAAGGSFGRREA). Gly residues predominate over residues 25 to 38 (LGTGAGKGGGGGGS). The stretch at 58 to 105 (FRQKEREQLAALKNHHEEEIDHHKKEIERLQREIDRHKGKIRKLKHDD) forms a coiled coil. Residues 73–105 (HEEEIDHHKKEIERLQREIDRHKGKIRKLKHDD) are antiparallel alpha-helical coiled coil region.

The protein belongs to the ATPase inhibitor family. Homodimer; represents the active form and is present at a pH value below 6.5. Homotetramer; represents the inactive form and is present at a pH value above 7.0.

It is found in the mitochondrion. Its function is as follows. Endogenous F(1)F(o)-ATPase inhibitor limiting ATP depletion when the mitochondrial membrane potential falls below a threshold and the F(1)F(o)-ATP synthase starts hydrolyzing ATP to pump protons out of the mitochondrial matrix. Required to avoid the consumption of cellular ATP when the F(1)F(o)-ATP synthase enzyme acts as an ATP hydrolase. Indirectly acts as a regulator of heme synthesis in erythroid tissues: regulates heme synthesis by modulating the mitochondrial pH and redox potential, allowing fech to efficiently catalyze the incorporation of iron into protoporphyrin IX to produce heme. This Danio rerio (Zebrafish) protein is ATPase inhibitor A, mitochondrial.